A 276-amino-acid chain; its full sequence is Outer membrane lipoprotein 2 (276 aa).

A signal peptide spans 1–19; the sequence is MNFKKLLGVALVSALALTA. Cysteine 20 carries N-palmitoyl cysteine lipidation. A lipid anchor (S-diacylglycerol cysteine) is attached at cysteine 20.

This sequence belongs to the NlpA lipoprotein family.

It is found in the cell outer membrane. This chain is Outer membrane lipoprotein 2 (plpB), found in Mannheimia haemolytica (Pasteurella haemolytica).